A 423-amino-acid chain; its full sequence is Oligopeptide transport ATP-binding protein OppD (423 aa).

The ABC transporter domain maps to 24–309 (IRDLHVSFKV…PVHPYTWALM (286 aa)). 58-65 (GESGSGKS) is a binding site for ATP. The interval 398-423 (AIKMPSQPVKQPKSNGNKKTKTKSAR) is disordered. Over residues 413–423 (GNKKTKTKSAR) the composition is skewed to basic residues.

The protein belongs to the ABC transporter superfamily. In terms of assembly, the complex is composed of two ATP-binding proteins (OppD and OppF), two transmembrane proteins (OppB and OppC) and a solute-binding protein (OppA).

The protein resides in the cell membrane. It catalyses the reaction a [peptide](out) + ATP + H2O = a [peptide](in) + ADP + phosphate + H(+). Part of the ABC transporter complex OppABCDF involved in the uptake of oligopeptides. Probably responsible for energy coupling to the transport system. This chain is Oligopeptide transport ATP-binding protein OppD (oppD), found in Mycoplasma pneumoniae (strain ATCC 29342 / M129 / Subtype 1) (Mycoplasmoides pneumoniae).